A 356-amino-acid chain; its full sequence is Cysteine proteinase 3 (356 aa).

A signal peptide spans 1 to 16 (MSRLSLVLILVAGLFA). Positions 17–138 (TALAGPATFA…KGNLKLTNVV (122 aa)) are cleaved as a propeptide — activation peptide. Residue N123 is glycosylated (N-linked (GlcNAc...) asparagine). Intrachain disulfides connect C160–C203 and C194–C236. Residue C163 is part of the active site. N252 is a glycosylation site (N-linked (GlcNAc...) asparagine). An intrachain disulfide couples C294 to C344. Catalysis depends on residues H303 and N323.

Belongs to the peptidase C1 family. Predominantly expressed in stem and root.

The protein resides in the vacuole. In Solanum lycopersicum (Tomato), this protein is Cysteine proteinase 3 (CYP-3).